A 237-amino-acid polypeptide reads, in one-letter code: Purine nucleoside phosphorylase DeoD-type (237 aa).

Histidine 4 is a binding site for a purine D-ribonucleoside. Residues glycine 20, arginine 24, arginine 43, and 87-90 (RVGT) each bind phosphate. Residues 179–181 (EME) and 203–204 (SD) contribute to the a purine D-ribonucleoside site. The active-site Proton donor is aspartate 204.

This sequence belongs to the PNP/UDP phosphorylase family. As to quaternary structure, homohexamer; trimer of homodimers.

The enzyme catalyses a purine D-ribonucleoside + phosphate = a purine nucleobase + alpha-D-ribose 1-phosphate. It catalyses the reaction a purine 2'-deoxy-D-ribonucleoside + phosphate = a purine nucleobase + 2-deoxy-alpha-D-ribose 1-phosphate. Functionally, catalyzes the reversible phosphorolytic breakdown of the N-glycosidic bond in the beta-(deoxy)ribonucleoside molecules, with the formation of the corresponding free purine bases and pentose-1-phosphate. This Streptococcus uberis (strain ATCC BAA-854 / 0140J) protein is Purine nucleoside phosphorylase DeoD-type.